A 120-amino-acid chain; its full sequence is Ribonuclease P protein component 4 (120 aa).

Zn(2+) contacts are provided by C68, C71, C97, and C100.

The protein belongs to the eukaryotic/archaeal RNase P protein component 4 family. As to quaternary structure, consists of a catalytic RNA component and at least 5 protein subunits. Forms a heterodimeric subcomplex with Rnp1. Reconstituted enzyme missing individual protein subunits is suboptimally active, showing each subunit contributes to optimization of activity. It depends on Zn(2+) as a cofactor.

Its subcellular location is the cytoplasm. It carries out the reaction Endonucleolytic cleavage of RNA, removing 5'-extranucleotides from tRNA precursor.. In terms of biological role, part of ribonuclease P, a protein complex that generates mature tRNA molecules by cleaving their 5'-ends. Binds RNase P RNA. The chain is Ribonuclease P protein component 4 from Pyrococcus horikoshii (strain ATCC 700860 / DSM 12428 / JCM 9974 / NBRC 100139 / OT-3).